The following is a 1614-amino-acid chain: Protein scribble homolog (1614 aa).

The interval 1-809 (MLKCIPLWRC…MRLWRERMVE (809 aa)) is sufficient for targeting to adherens junction and to inhibit cell proliferation. LRR repeat units follow at residues 11–34 (NRHVESVDKRHCSLQAVPEEIYRY), 35–58 (SRSLEELLLDANQLRELPKPFFRL), 59–81 (LNLRKLGLSDNEIQRLPPEVANF), 83–105 (QLVELDVSRNDIPEIPESIKFCK), 107–127 (LEIADFSGNPLSRLPEGFTQL), 128–150 (RSLAHLALNDVSLQALPGDVGNL), 151–173 (ANLVTLELRENLLKSLPSSLSFL), 174–196 (VKLEQLDLGGNELEVLPDTLGAL), 197–219 (PNLRELWLDRNQLSALPPELGNL), 221–242 (RLVCLDVSENRLEELPAELGGL), 243–265 (LLLTDLLLSQNLLQRLPDGIGQL), 267–288 (QLSILKVDQNRLCEVTEAIGDC), 289–311 (ENLSELILTENLLTALPRSLGKL), 312–334 (TKLTNLNADRNRLEVLPPEIGGC), 336–357 (ALSVLSLRDNRLATLPAELAHT), 359–380 (ELHVLDVAGNRLQSLPFALTHL), and 382–405 (LKALWLAENQAQPMLRFQTEDDAQ). A Phosphoserine modification is found at Ser-37. At Thr-378 the chain carries Phosphothreonine. Disordered regions lie at residues 417-441 (PQQPPPSLEESGLQSSPSESWSDAP), 462-608 (GAAA…RLIR), and 636-692 (AQPD…VVSA). The segment covering 428–437 (GLQSSPSESW) has biased composition (polar residues). Thr-475 bears the Phosphothreonine mark. The span at 479 to 494 (SELKVMKRGVEERRGE) shows a compositional bias: basic and acidic residues. Residues 516–533 (TESGLSEDSQPSTGTASQ) show a composition bias toward polar residues. The segment covering 548–557 (QQEAAPNAQE) has biased composition (low complexity). Residues 662–686 (EEEDEEDEEEDEEEEEVAVAEEDKE) are compositionally biased toward acidic residues. Residues 664–691 (EDEEDEEEDEEEEEVAVAEEDKEEAVVS) adopt a coiled-coil conformation. Phosphoserine is present on residues Ser-699 and Ser-755. The segment at 708-1219 (IEPARIEEEE…SLESVSSIDR (512 aa)) is interaction with ARHGEF7. The 88-residue stretch at 719-806 (TLTIVRQTGG…TVQMRLWRER (88 aa)) folds into the PDZ 1 domain. The required for interaction with VIM stretch occupies residues 719 to 1184 (TLTIVRQTGG…TVLVCDGFDT (466 aa)). Residue Thr-817 is modified to Phosphothreonine. Ser-826, Ser-866, and Ser-930 each carry phosphoserine. The region spanning 853–941 (VACLVRSEKG…TIALLLEREA (89 aa)) is the PDZ 2 domain. The tract at residues 940–971 (EAGGPLPPSPLPHSPPPPVTAPSTVVTASPGE) is disordered. Positions 944 to 959 (PLPPSPLPHSPPPPVT) are enriched in pro residues. The span at 960–969 (APSTVVTASP) shows a compositional bias: low complexity. PDZ domains follow at residues 994–1083 (EICL…RRDP) and 1090–1178 (ELCI…TVLV). Phosphoserine occurs at positions 1130, 1210, 1213, 1216, 1222, 1260, 1268, and 1271. Residues 1214–1448 (VSSIDRELSP…LPDRALSPAE (235 aa)) form a disordered region. Over residues 1217-1232 (IDRELSPEGCGKEKEP) the composition is skewed to basic and acidic residues. Thr-1304 bears the Phosphothreonine mark. Ser-1310 is subject to Phosphoserine. The span at 1315–1327 (SFRERQKYFELEV) shows a compositional bias: basic and acidic residues. Residue Ser-1340 is modified to Phosphoserine. Positions 1341 to 1368 (LVGADDLRKMQEEEARKLQQKRAQLMRE) form a coiled coil. The segment covering 1345–1357 (DDLRKMQEEEARK) has biased composition (basic and acidic residues). Acidic residues predominate over residues 1378–1390 (LDGEAPDDEEPEE). Low complexity predominate over residues 1396–1408 (GPAAGLSPSSPQP). Phosphoserine is present on residues Ser-1402 and Ser-1405. A compositionally biased stretch (basic and acidic residues) spans 1418 to 1429 (AKAERRHQERLR). Residues Ser-1432, Ser-1445, and Ser-1467 each carry the phosphoserine modification. The disordered stretch occupies residues 1476-1524 (QMVLSKSQEGRSRRGPLERLAEAPSPAPTPSPTPVEDLGLQTSTSPGRL). Basic and acidic residues predominate over residues 1483–1496 (QEGRSRRGPLERLA). Residue Ser-1500 is modified to Phosphoserine. Phosphothreonine is present on Thr-1504. 3 positions are modified to phosphoserine: Ser-1506, Ser-1520, and Ser-1550. Positions 1581–1614 (GRPSPGTVGPEEVTLCSSRRPVRPGRRGLGPVPS) are disordered.

It belongs to the LAP (LRR and PDZ) protein family. As to quaternary structure, interacts with UBE3A. Interacts with PAK1 and PAK2. Interacts (via PDZ domains) with VANGL2. Interacts (via PDZ domains) with LPP and TRIP6; the interaction is direct. Interacts (via PDZ domains) with TJP2. Interacts (via PDZ domains) with APC; may mediate APC targeting to adherens junctions of epithelial cells. Interacts (via PDZ domains) with TSHR; regulates TSHR trafficking and function. Interacts with ARHGEF7 and GIT1; interacts directly with ARHGEF7. Interacts with CTNNB1. Interacts with MAPK12. Interacts (via PDZ domains 1 and 3) with MCC. Interacts with DLG5. Interacts with STK4/MST1 and LATS1 in the presence of DLG5. Interacts (via PDZ domain 3) with CRTAM (via PDZ-binding motif); the interaction promotes CRTAM and SCRIB polarization in a subset of CD4+ T-cells. Interacts with YES1, when YES1 is in a closed conformation; the interaction facilitates YES1 autophosphorylation. Interacts (via PDZ domains) with VIM; the interaction protects SCRIB from proteasomal degradation and facilitates SCRIB localization to intermediate filaments, the interaction is reduced by cell contact inhibition. In terms of processing, ubiquitinated; targeted for UBE3A-dependent multiubiquitination and degraded. Palmitoylated. Could be depalmitoylated by LYPLA1 and/or LYPLA2. Palmitoylation of SCRIB by ZDHHC7 is required for its localization to cell-cell junctions, function in the establishement of epithelial cell polarity and the regulation of downstream signaling pathways important for epithelial cell differentiation.

Its subcellular location is the cell membrane. It is found in the cell junction. It localises to the adherens junction. The protein localises to the cell projection. The protein resides in the lamellipodium. Its subcellular location is the cytoplasm. It is found in the postsynapse. It localises to the presynapse. Functionally, scaffold protein involved in different aspects of polarized cell differentiation regulating epithelial and neuronal morphogenesis and T-cell polarization. Via its interaction with CRTAM, required for the late phase polarization of a subset of CD4+ T-cells, which in turn regulates TCR-mediated proliferation and IFNG and IL22 production. Plays a role in cell directional movement, cell orientation, cell sheet organization and Golgi complex polarization at the cell migration front. Promotes epithelial cell layer barrier function via maintaining cell-cell adhesion. Most probably functions in the establishment of apico-basal cell polarity. May function in cell proliferation regulating progression from G1 to S phase and as a positive regulator of apoptosis for instance during acinar morphogenesis of the mammary epithelium. May regulate cell invasion via MAPK-mediated cell migration and adhesion. May play a role in exocytosis and in the targeting of synaptic vesicles to synapses. Functions as an activator of Rac GTPase activity. This Canis lupus familiaris (Dog) protein is Protein scribble homolog.